The primary structure comprises 78 residues: MATGTPAAELRELTEEELVTRLRESKEELFNLRFQMATGQMDNNRRLRTVRHEIARIYTVLRERELGLAVGPDAGDAA.

This sequence belongs to the universal ribosomal protein uL29 family.

The chain is Large ribosomal subunit protein uL29 from Rhodococcus opacus (strain B4).